The sequence spans 216 residues: DDB1- and CUL4-associated factor 16 (216 aa).

Residues 1 to 42 (MGPRNPSPDHLSESESEEEENISYLNESSGEEWDSSEEEDSM) are disordered. Over residues 29-41 (SGEEWDSSEEEDS) the composition is skewed to acidic residues. K61 is subject to N6-acetyllysine.

As to quaternary structure, interacts with DDB1 and CUL4A.

The protein localises to the nucleus. Its pathway is protein modification; protein ubiquitination. Functionally, functions as a substrate recognition component for CUL4-DDB1 E3 ubiquitin-protein ligase complex, which mediates ubiquitination and proteasome-dependent degradation of nuclear proteins. The chain is DDB1- and CUL4-associated factor 16 from Homo sapiens (Human).